Reading from the N-terminus, the 383-residue chain is Neuropeptide Y receptor type 1 (383 aa).

The Extracellular portion of the chain corresponds to methionine 1–histidine 34. Asparagine 2, asparagine 11, and asparagine 17 each carry an N-linked (GlcNAc...) asparagine glycan. A helical membrane pass occupies residues leucine 35–valine 55. The Cytoplasmic portion of the chain corresponds to serine 56–leucine 87. The helical transmembrane segment at leucine 88–phenylalanine 108 threads the bilayer. Topologically, residues glycine 109 to asparagine 116 are extracellular. The cysteines at positions 113 and 198 are disulfide-linked. The helical transmembrane segment at proline 117–glutamate 137 threads the bilayer. Over arginine 138–histidine 154 the chain is Cytoplasmic. The chain crosses the membrane as a helical span at residues alanine 155–isoleucine 175. Residues tyrosine 176–tyrosine 211 lie on the Extracellular side of the membrane. The helical transmembrane segment at threonine 212–phenylalanine 232 threads the bilayer. The Cytoplasmic portion of the chain corresponds to lysine 233–arginine 260. The chain crosses the membrane as a helical span at residues isoleucine 261–isoleucine 281. The Extracellular portion of the chain corresponds to phenylalanine 282 to asparagine 299. Residues leucine 300 to tyrosine 320 form a helical membrane-spanning segment. Residues glycine 321–isoleucine 383 lie on the Cytoplasmic side of the membrane. Cysteine 338 carries the S-palmitoyl cysteine lipid modification. A phosphoserine mark is found at serine 368 and serine 376.

The protein belongs to the G-protein coupled receptor 1 family.

It localises to the cell membrane. Its function is as follows. Receptor for neuropeptide Y and peptide YY. The sequence is that of Neuropeptide Y receptor type 1 (NPY1R) from Cavia porcellus (Guinea pig).